The chain runs to 463 residues: Glycine--tRNA ligase (463 aa).

Substrate-binding residues include Arg-102 and Glu-165. Residues Arg-197–Glu-199, Phe-207–Phe-212, Glu-284–Leu-285, and Gly-328–Arg-331 each bind ATP. Phe-212–Glu-216 provides a ligand contact to substrate. Residue Glu-324–Gly-328 coordinates substrate.

Belongs to the class-II aminoacyl-tRNA synthetase family. As to quaternary structure, homodimer.

It localises to the cytoplasm. The catalysed reaction is tRNA(Gly) + glycine + ATP = glycyl-tRNA(Gly) + AMP + diphosphate. Catalyzes the attachment of glycine to tRNA(Gly). In Mycobacterium bovis (strain ATCC BAA-935 / AF2122/97), this protein is Glycine--tRNA ligase.